An 828-amino-acid polypeptide reads, in one-letter code: Periplasmic nitrate reductase (828 aa).

Positions 1–31 (MKLSRRHFMKANAVAAAAAVAGITIPIAVRA) form a signal peptide, tat-type signal. The 4Fe-4S Mo/W bis-MGD-type domain occupies 39–95 (IHWDKAPCRFCGVGCGVLVGTQNGRIVASQGDPEAPVNRGLNCIKGYFLPKIMYGQD). The [4Fe-4S] cluster site is built by cysteine 46, cysteine 49, cysteine 53, and cysteine 81. Residues lysine 83, glutamine 150, asparagine 175, cysteine 179, 212–219 (WGSNMAEM), 243–247 (STYQH), 262–264 (QTD), methionine 372, glutamine 376, asparagine 482, 508–509 (SD), lysine 531, aspartate 558, and 718–727 (TGRVLEHWHT) each bind Mo-bis(molybdopterin guanine dinucleotide). Substrate is bound at residue phenylalanine 794. The Mo-bis(molybdopterin guanine dinucleotide) site is built by asparagine 802 and lysine 819.

It belongs to the prokaryotic molybdopterin-containing oxidoreductase family. NasA/NapA/NarB subfamily. As to quaternary structure, component of the periplasmic nitrate reductase NapAB complex composed of NapA and NapB. The cofactor is [4Fe-4S] cluster. Mo-bis(molybdopterin guanine dinucleotide) serves as cofactor. Predicted to be exported by the Tat system. The position of the signal peptide cleavage has not been experimentally proven.

The protein resides in the periplasm. The catalysed reaction is 2 Fe(II)-[cytochrome] + nitrate + 2 H(+) = 2 Fe(III)-[cytochrome] + nitrite + H2O. In terms of biological role, catalytic subunit of the periplasmic nitrate reductase complex NapAB. Receives electrons from NapB and catalyzes the reduction of nitrate to nitrite. The sequence is that of Periplasmic nitrate reductase from Pectobacterium atrosepticum (strain SCRI 1043 / ATCC BAA-672) (Erwinia carotovora subsp. atroseptica).